We begin with the raw amino-acid sequence, 340 residues long: Agmatinase, mitochondrial (340 aa).

Residues His-150, Asp-173, His-175, Asp-177, Asp-264, and Asp-266 each coordinate Mn(2+).

Belongs to the arginase family. Agmatinase subfamily. It depends on Mn(2+) as a cofactor.

It localises to the mitochondrion. The catalysed reaction is agmatine + H2O = urea + putrescine. It participates in amine and polyamine biosynthesis; putrescine biosynthesis via agmatine pathway; putrescine from agmatine: step 1/1. The protein is Agmatinase, mitochondrial (AGMAT) of Gallus gallus (Chicken).